We begin with the raw amino-acid sequence, 344 residues long: S-methyl-5'-thioadenosine phosphorylase (344 aa).

Phosphate contacts are provided by residues Thr51, 99-100, and 132-133; these read RH and SA. Substrate is bound at residue Met234. Ser235 contributes to the phosphate binding site. 258-260 contacts substrate; sequence DYD.

This sequence belongs to the PNP/MTAP phosphorylase family. MTAP subfamily. Homotrimer.

It localises to the cytoplasm. Its subcellular location is the nucleus. The catalysed reaction is S-methyl-5'-thioadenosine + phosphate = 5-(methylsulfanyl)-alpha-D-ribose 1-phosphate + adenine. Its pathway is amino-acid biosynthesis; L-methionine biosynthesis via salvage pathway; S-methyl-5-thio-alpha-D-ribose 1-phosphate from S-methyl-5'-thioadenosine (phosphorylase route): step 1/1. Functionally, catalyzes the reversible phosphorylation of S-methyl-5'-thioadenosine (MTA) to adenine and 5-methylthioribose-1-phosphate. Involved in the breakdown of MTA, a major by-product of polyamine biosynthesis. Responsible for the first step in the methionine salvage pathway after MTA has been generated from S-adenosylmethionine. Has broad substrate specificity with 6-aminopurine nucleosides as preferred substrates. The sequence is that of S-methyl-5'-thioadenosine phosphorylase from Phaeosphaeria nodorum (strain SN15 / ATCC MYA-4574 / FGSC 10173) (Glume blotch fungus).